The sequence spans 216 residues: Kynurenine formamidase (216 aa).

Substrate is bound at residue tryptophan 25. Positions 55, 59, and 61 each coordinate Zn(2+). Catalysis depends on histidine 65, which acts as the Proton donor/acceptor. The Zn(2+) site is built by histidine 167 and glutamate 179.

Belongs to the Cyclase 1 superfamily. KynB family. Homodimer. Requires Zn(2+) as cofactor.

It carries out the reaction N-formyl-L-kynurenine + H2O = L-kynurenine + formate + H(+). Its pathway is amino-acid degradation; L-tryptophan degradation via kynurenine pathway; L-kynurenine from L-tryptophan: step 2/2. In terms of biological role, catalyzes the hydrolysis of N-formyl-L-kynurenine to L-kynurenine, the second step in the kynurenine pathway of tryptophan degradation. The chain is Kynurenine formamidase from Cupriavidus necator (strain ATCC 17699 / DSM 428 / KCTC 22496 / NCIMB 10442 / H16 / Stanier 337) (Ralstonia eutropha).